The chain runs to 437 residues: UDP-N-acetylmuramate--L-alanine ligase (437 aa).

Position 108 to 114 (108 to 114) interacts with ATP; it reads GAHGKTS.

Belongs to the MurCDEF family.

The protein resides in the cytoplasm. It catalyses the reaction UDP-N-acetyl-alpha-D-muramate + L-alanine + ATP = UDP-N-acetyl-alpha-D-muramoyl-L-alanine + ADP + phosphate + H(+). It functions in the pathway cell wall biogenesis; peptidoglycan biosynthesis. Its function is as follows. Cell wall formation. The protein is UDP-N-acetylmuramate--L-alanine ligase of Staphylococcus carnosus (strain TM300).